Here is a 91-residue protein sequence, read N- to C-terminus: Small ribosomal subunit protein bS18 (91 aa).

The protein belongs to the bacterial ribosomal protein bS18 family. As to quaternary structure, part of the 30S ribosomal subunit. Forms a tight heterodimer with protein bS6.

Binds as a heterodimer with protein bS6 to the central domain of the 16S rRNA, where it helps stabilize the platform of the 30S subunit. The chain is Small ribosomal subunit protein bS18 from Paraburkholderia phymatum (strain DSM 17167 / CIP 108236 / LMG 21445 / STM815) (Burkholderia phymatum).